We begin with the raw amino-acid sequence, 446 residues long: MDSRQYAENIAKKAKNTVRKLSSLTTKTKNDALLRTAELLLERKSQIIEENKKDLELAEKKGYSKALLDRLALDDKRINQMVQVLKDVAALPDPVGEIINMWTRPNGLKVGQMRVPLGVILIIYEARPNVTIEAASLCMKSSNAVILKGGSETINSNRILVDIIKQACRETCFPEEAVQFVDTTDREVVNHLLKLEGLIDVAIPRGGESLIRAVAENSKIPVIKHYKGVCNLYVDDEADMEKALNIAYNAKVQRPSVCNAIENLVVHKKIADKFLPEIAYYFGKAGVEMRCDEYSYNLLINHPKAKDTEIVPAKEEDYYEEFLDLIIAVKVVDSLDEAIDFIEKYGSHHSDAIVTENYTKGMKFIQDVDSAAVYINASTRFTDGNEFGLGAEMGISTDKIHARGPMALKELTIPKFIVFGNGQLRENVGIPKDESEIKIDTNACSL.

This sequence belongs to the gamma-glutamyl phosphate reductase family.

It is found in the cytoplasm. It catalyses the reaction L-glutamate 5-semialdehyde + phosphate + NADP(+) = L-glutamyl 5-phosphate + NADPH + H(+). The protein operates within amino-acid biosynthesis; L-proline biosynthesis; L-glutamate 5-semialdehyde from L-glutamate: step 2/2. Functionally, catalyzes the NADPH-dependent reduction of L-glutamate 5-phosphate into L-glutamate 5-semialdehyde and phosphate. The product spontaneously undergoes cyclization to form 1-pyrroline-5-carboxylate. This Sulfurihydrogenibium sp. (strain YO3AOP1) protein is Gamma-glutamyl phosphate reductase.